We begin with the raw amino-acid sequence, 834 residues long: DNA gyrase subunit A (834 aa).

In terms of domain architecture, Topo IIA-type catalytic spans 34–500; it reads LPDIRDGLKP…ADDIRDIEDI (467 aa). The O-(5'-phospho-DNA)-tyrosine intermediate role is filled by Y122. Positions 527–533 match the GyrA-box motif; sequence QRRGGHG. Positions 810–834 are disordered; sequence LSSNENDDEVLSGSEEECSDTVSLR. Over residues 814 to 828 the composition is skewed to acidic residues; it reads ENDDEVLSGSEEECS.

Belongs to the type II topoisomerase GyrA/ParC subunit family. In terms of assembly, heterotetramer, composed of two GyrA and two GyrB chains. In the heterotetramer, GyrA contains the active site tyrosine that forms a transient covalent intermediate with DNA, while GyrB binds cofactors and catalyzes ATP hydrolysis.

It is found in the cytoplasm. It carries out the reaction ATP-dependent breakage, passage and rejoining of double-stranded DNA.. A type II topoisomerase that negatively supercoils closed circular double-stranded (ds) DNA in an ATP-dependent manner to modulate DNA topology and maintain chromosomes in an underwound state. Negative supercoiling favors strand separation, and DNA replication, transcription, recombination and repair, all of which involve strand separation. Also able to catalyze the interconversion of other topological isomers of dsDNA rings, including catenanes and knotted rings. Type II topoisomerases break and join 2 DNA strands simultaneously in an ATP-dependent manner. The polypeptide is DNA gyrase subunit A (Chlamydia pneumoniae (Chlamydophila pneumoniae)).